The primary structure comprises 456 residues: MATFARMVKGQVRYYSAPLDMAIPASKQKYIPASGTYPKGFSVSGTHVGVKASNTRFPDLALISSETPCSAAAVFTTNKFQAAPVQASKNTLKATQGEGIRSVVINSGCANAVTGKGGLEDAVSMGAKVDECNGLAQPSTLVMSTGVIGQRLPISKILDKIPTAHSTLSSTHDSWLTTARAICTTDTFPKLLSQTFTLPSSPNRTYRLAGMTKGAGMIHPNMATLLGVLCTDAPIASSALQPLLKHAVSRSFNSISVDGDTSTNDTIAILANGAAGGAPITSTSSADYTAMQNVLTSFAQSLSQLVVRDGEGATKFVTVRVQNSPDYESARLIASTIARSPLVKTALYGKDANWGRILCAIGYTQGVAEGTVVPERTSVSFKPVDGSAELKLLVNGEPEQVDEDRAAVILQEEDLEIVVDLGGGEKGEKGLGGEEAIYWFCDFSHEYVTINGDYRT.

Threonine 184, lysine 213, threonine 224, glutamate 311, asparagine 451, and threonine 456 together coordinate substrate. Threonine 224 serves as the catalytic Nucleophile.

Belongs to the ArgJ family. As to quaternary structure, heterodimer of an alpha and a beta chain. The alpha and beta chains are autoproteolytically processed from a single precursor protein within the mitochondrion.

It is found in the mitochondrion matrix. It catalyses the reaction N(2)-acetyl-L-ornithine + L-glutamate = N-acetyl-L-glutamate + L-ornithine. It carries out the reaction L-glutamate + acetyl-CoA = N-acetyl-L-glutamate + CoA + H(+). The protein operates within amino-acid biosynthesis; L-arginine biosynthesis; L-ornithine and N-acetyl-L-glutamate from L-glutamate and N(2)-acetyl-L-ornithine (cyclic): step 1/1. Its pathway is amino-acid biosynthesis; L-arginine biosynthesis; N(2)-acetyl-L-ornithine from L-glutamate: step 1/4. Catalyzes two activities which are involved in the cyclic version of arginine biosynthesis: the synthesis of acetylglutamate from glutamate and acetyl-CoA, and of ornithine by transacetylation between acetylornithine and glutamate. This chain is Arginine biosynthesis bifunctional protein ArgJ, mitochondrial, found in Aspergillus niger (strain ATCC MYA-4892 / CBS 513.88 / FGSC A1513).